A 971-amino-acid polypeptide reads, in one-letter code: Xylanolytic transcriptional activator xlnR (971 aa).

Disordered regions lie at residues 1-25 and 55-123; these read MSTT…PVGM and GASA…PVRR. Residues 9–18 are compositionally biased toward low complexity; it reads FTSSFSPFSS. A compositionally biased stretch (polar residues) spans 67-96; it reads LRSSISKPQGQQLYSDESSAQHTQNATTGF. The segment at residues 129–155 is a DNA-binding region (zn(2)-C6 fungal-type); that stretch reads CDQCNQLRTKCDGQNPCAHCIEFGLTC. Polar residues-rich tracts occupy residues 182 to 199, 227 to 241, and 249 to 260; these read NGTA…SVSS, NLAT…QHSD, and QGSQQTPHSQPS. 3 disordered regions span residues 182 to 263, 295 to 316, and 580 to 610; these read NGTA…SLGG, LHPS…GMNS, and RELP…NLPP.

The protein belongs to the xlnR/xlr1 family.

It is found in the nucleus. In terms of biological role, transcriptional activator of the xylanolytic system. Involved in the regulation of extracellular cellulolytic and xylanolytic genes and in the regulation of the intracellular activities of D-xylose catabolic genes in the pentose catabolic pathway (PCP) in response to the presence of D-xylose. This chain is Xylanolytic transcriptional activator xlnR (xlnR), found in Aspergillus flavus (strain ATCC 200026 / FGSC A1120 / IAM 13836 / NRRL 3357 / JCM 12722 / SRRC 167).